The following is a 466-amino-acid chain: Oxysterol-binding protein 4 (466 aa).

Positions 1 to 12 are enriched in polar residues; the sequence is MEIGTSSTTNNI. The tract at residues 1–67 is disordered; the sequence is MEIGTSSTTN…STSPPSPPIE (67 aa). The segment covering 24–45 has biased composition (low complexity); sequence NNNNHNNNSSNNSSNNNSISSS. Positions 46 to 60 are enriched in polar residues; that stretch reads PTDSSQLMNGEQSTS.

Belongs to the OSBP family.

In Dictyostelium discoideum (Social amoeba), this protein is Oxysterol-binding protein 4 (osbD).